The primary structure comprises 212 residues: MSTENTNTAVAEEIPNLLITPSAQEYLHELLAKQNTPGIGVRIFVEHPGTPRAECCMAYSAPEEVVPTDYKQDYPDFPAYIDAPSIPYLLDAVIDYNKDRFGGQLTFRAPNSKVPRVGPDASIEERITYVLQAEINPGLAGHGGNCSLVEVQDDPEHGLTAVLKFGGGCQGCSAIDVTLKQGVETTLKEHIPELQRVVDQTDHTQAEGAYFK.

2 residues coordinate [4Fe-4S] cluster: Cys169 and Cys172.

Belongs to the NfuA family. As to quaternary structure, homodimer. It depends on [4Fe-4S] cluster as a cofactor.

In terms of biological role, involved in iron-sulfur cluster biogenesis. Binds a 4Fe-4S cluster, can transfer this cluster to apoproteins, and thereby intervenes in the maturation of Fe/S proteins. Could also act as a scaffold/chaperone for damaged Fe/S proteins. In Acinetobacter baumannii (strain AB307-0294), this protein is Fe/S biogenesis protein NfuA.